A 94-amino-acid polypeptide reads, in one-letter code: Large ribosomal subunit protein eL42 (94 aa).

Zn(2+) contacts are provided by C11, C14, C71, and C74. The segment at 11-74 (CPFCKKHTIH…LDLRFRCTEC (64 aa)) adopts a C4-type zinc-finger fold.

It belongs to the eukaryotic ribosomal protein eL42 family. Part of the 50S ribosomal subunit. Requires Zn(2+) as cofactor.

In terms of biological role, binds to the 23S rRNA. The polypeptide is Large ribosomal subunit protein eL42 (Pyrococcus furiosus (strain ATCC 43587 / DSM 3638 / JCM 8422 / Vc1)).